We begin with the raw amino-acid sequence, 484 residues long: UBX domain-containing protein 11 (484 aa).

The segment at Met1 to Ile28 is disordered. The stretch at His69–Asp147 forms a coiled coil. Residues Leu227–Pro291 enclose the SEP domain. The UBX domain maps to Pro389–Leu466. Phosphoserine is present on residues Ser478 and Ser482.

As to quaternary structure, interacts with GNA12, GNA13, RND1, RND2 and RND3.

It localises to the cytoplasm. Its subcellular location is the cytoskeleton. Its function is as follows. May be involved in the reorganization of actin cytoskeleton mediated by RND1, RND2 and RND3. Promotes RHOA activation mediated by GNA12 and GNA13. This chain is UBX domain-containing protein 11 (Ubxn11), found in Mus musculus (Mouse).